The following is a 187-amino-acid chain: Ribosome-recycling factor (187 aa).

The protein belongs to the RRF family.

It localises to the cytoplasm. In terms of biological role, responsible for the release of ribosomes from messenger RNA at the termination of protein biosynthesis. May increase the efficiency of translation by recycling ribosomes from one round of translation to another. This chain is Ribosome-recycling factor, found in Methylobacterium nodulans (strain LMG 21967 / CNCM I-2342 / ORS 2060).